Reading from the N-terminus, the 315-residue chain is Ribosomal RNA small subunit methyltransferase H (315 aa).

Residues 35 to 37, Asp55, Phe80, Asp102, and Gln109 each bind S-adenosyl-L-methionine; that span reads GGH.

The protein belongs to the methyltransferase superfamily. RsmH family.

Its subcellular location is the cytoplasm. The catalysed reaction is cytidine(1402) in 16S rRNA + S-adenosyl-L-methionine = N(4)-methylcytidine(1402) in 16S rRNA + S-adenosyl-L-homocysteine + H(+). Functionally, specifically methylates the N4 position of cytidine in position 1402 (C1402) of 16S rRNA. The chain is Ribosomal RNA small subunit methyltransferase H from Shewanella pealeana (strain ATCC 700345 / ANG-SQ1).